The sequence spans 258 residues: NAD-capped RNA hydrolase NudC (258 aa).

Arginine 69 contributes to the substrate binding site. Residues cysteine 98 and cysteine 101 each coordinate Zn(2+). Glutamate 111 contacts substrate. Zn(2+)-binding residues include cysteine 116 and cysteine 119. A substrate-binding site is contributed by tyrosine 124. Positions 125 to 248 (PQIAPCIIVA…TVARRLIEDT (124 aa)) constitute a Nudix hydrolase domain. The a divalent metal cation site is built by alanine 158, glutamate 174, and glutamate 178. Positions 159 to 180 (GFVEVGETLEQTVAREVMEESG) match the Nudix box motif. Substrate is bound at residue 192–199 (QPWPFPMS). Glutamate 219 is a binding site for a divalent metal cation. Alanine 241 contacts substrate.

It belongs to the Nudix hydrolase family. NudC subfamily. Homodimer. Mg(2+) is required as a cofactor. The cofactor is Mn(2+). It depends on Zn(2+) as a cofactor.

The catalysed reaction is a 5'-end NAD(+)-phospho-ribonucleoside in mRNA + H2O = a 5'-end phospho-adenosine-phospho-ribonucleoside in mRNA + beta-nicotinamide D-ribonucleotide + 2 H(+). It carries out the reaction NAD(+) + H2O = beta-nicotinamide D-ribonucleotide + AMP + 2 H(+). The enzyme catalyses NADH + H2O = reduced beta-nicotinamide D-ribonucleotide + AMP + 2 H(+). Its function is as follows. mRNA decapping enzyme that specifically removes the nicotinamide adenine dinucleotide (NAD) cap from a subset of mRNAs by hydrolyzing the diphosphate linkage to produce nicotinamide mononucleotide (NMN) and 5' monophosphate mRNA. The NAD-cap is present at the 5'-end of some mRNAs and stabilizes RNA against 5'-processing. Has preference for mRNAs with a 5'-end purine. Catalyzes the hydrolysis of a broad range of dinucleotide pyrophosphates. This Enterobacter sp. (strain 638) protein is NAD-capped RNA hydrolase NudC.